The primary structure comprises 372 residues: MGRVPCCEKDNVKRGQWTPEEDNKLLSYITQYGTRNWRLIPKNAGLQRCGKSCRLRWTNYLRPDLKHGEFTDAEEQTIIKLHSVVGNRWSVIAAQLPGRTDNDVKNHWNTKLKKKLSGMGIDPVTHKSFSHLMAEIATTLAPPQVAHLAEAALGCFKDEMLHLLTKKRPSDFPSPAVHDGAGAGASASALAAPCFPAAPPHHPQADDTIERIKLGLSRAIMSDPSTASAAAAAAAPSAPAEDKPWPPGDMSEGLAGMYATYNPAAHAHAQAQAEFRYDGASAAQGYVLGGDGDQGTSMWSHQSLYSGSSGTEEARRELPEKGNDSVGSSGGDDDAADDGKDSGKGAASDMSGLFASDCVLWDLPDELTNHMV.

2 HTH myb-type domains span residues 9 to 65 (KDNV…RPDL) and 66 to 116 (KHGE…KKKL). 2 DNA-binding regions (H-T-H motif) span residues 37-61 (WRLI…TNYL) and 89-112 (WSVI…NTKL). Over residues 298–311 (MWSHQSLYSGSSGT) the composition is skewed to polar residues. Residues 298–347 (MWSHQSLYSGSSGTEEARRELPEKGNDSVGSSGGDDDAADDGKDSGKGAA) are disordered. The span at 312–323 (EEARRELPEKGN) shows a compositional bias: basic and acidic residues.

The protein localises to the nucleus. Essential for tapetum development in anthers and microsporogenesis. May regulate the timing of tapetal programmed cell death (PCD) which is critical for pollen development. In Oryza sativa subsp. japonica (Rice), this protein is Transcription factor MYB80.